The chain runs to 147 residues: Large ribosomal subunit protein bL9 (147 aa).

This sequence belongs to the bacterial ribosomal protein bL9 family.

Its function is as follows. Binds to the 23S rRNA. This is Large ribosomal subunit protein bL9 from Marinomonas sp. (strain MWYL1).